The chain runs to 388 residues: Succinate--CoA ligase [ADP-forming] subunit beta (388 aa).

The 236-residue stretch at 9–244 (KDLLSSYDIA…PSQENVRDVL (236 aa)) folds into the ATP-grasp domain. Residues Lys-46, 53–55 (GRG), Val-102, and Glu-107 contribute to the ATP site. 2 residues coordinate Mg(2+): Asn-199 and Asp-213. Substrate is bound by residues Asn-264 and 321–323 (GIM).

Belongs to the succinate/malate CoA ligase beta subunit family. As to quaternary structure, heterotetramer of two alpha and two beta subunits. It depends on Mg(2+) as a cofactor.

It catalyses the reaction succinate + ATP + CoA = succinyl-CoA + ADP + phosphate. The catalysed reaction is GTP + succinate + CoA = succinyl-CoA + GDP + phosphate. Its pathway is carbohydrate metabolism; tricarboxylic acid cycle; succinate from succinyl-CoA (ligase route): step 1/1. Functionally, succinyl-CoA synthetase functions in the citric acid cycle (TCA), coupling the hydrolysis of succinyl-CoA to the synthesis of either ATP or GTP and thus represents the only step of substrate-level phosphorylation in the TCA. The beta subunit provides nucleotide specificity of the enzyme and binds the substrate succinate, while the binding sites for coenzyme A and phosphate are found in the alpha subunit. The chain is Succinate--CoA ligase [ADP-forming] subunit beta from Chlamydia felis (strain Fe/C-56) (Chlamydophila felis).